A 283-amino-acid chain; its full sequence is uncharacterized protein (283 aa).

A compositionally biased stretch (basic and acidic residues) spans 208-232 (SMENKVNETQNSKEDEKKKNDGDGK). The interval 208–237 (SMENKVNETQNSKEDEKKKNDGDGKRSKKK) is disordered.

This is an uncharacterized protein from Saccharomyces cerevisiae (strain ATCC 204508 / S288c) (Baker's yeast).